Reading from the N-terminus, the 371-residue chain is UDP-N-acetylglucosamine--N-acetylmuramyl-(pentapeptide) pyrophosphoryl-undecaprenol N-acetylglucosamine transferase (371 aa).

UDP-N-acetyl-alpha-D-glucosamine is bound by residues 10-12, asparagine 122, arginine 166, serine 196, and glutamine 301; that span reads TGG.

It belongs to the glycosyltransferase 28 family. MurG subfamily.

It localises to the cell inner membrane. It catalyses the reaction di-trans,octa-cis-undecaprenyl diphospho-N-acetyl-alpha-D-muramoyl-L-alanyl-D-glutamyl-meso-2,6-diaminopimeloyl-D-alanyl-D-alanine + UDP-N-acetyl-alpha-D-glucosamine = di-trans,octa-cis-undecaprenyl diphospho-[N-acetyl-alpha-D-glucosaminyl-(1-&gt;4)]-N-acetyl-alpha-D-muramoyl-L-alanyl-D-glutamyl-meso-2,6-diaminopimeloyl-D-alanyl-D-alanine + UDP + H(+). It functions in the pathway cell wall biogenesis; peptidoglycan biosynthesis. In terms of biological role, cell wall formation. Catalyzes the transfer of a GlcNAc subunit on undecaprenyl-pyrophosphoryl-MurNAc-pentapeptide (lipid intermediate I) to form undecaprenyl-pyrophosphoryl-MurNAc-(pentapeptide)GlcNAc (lipid intermediate II). In Halothermothrix orenii (strain H 168 / OCM 544 / DSM 9562), this protein is UDP-N-acetylglucosamine--N-acetylmuramyl-(pentapeptide) pyrophosphoryl-undecaprenol N-acetylglucosamine transferase.